A 678-amino-acid chain; its full sequence is Platelet endothelial cell adhesion molecule (678 aa).

Positions 1-17 (MLLALLLTMLLYASLQA) are cleaved as a signal peptide. At 18–589 (QENSFTINSI…VRVFLAPWKK (572 aa)) the chain is on the extracellular side. Ig-like C2-type domains lie at 40-126 (GQKL…PEVT), 135-213 (GGIV…FIRS), 225-309 (PKFQ…ILVN), 315-391 (PRPK…LVPV), 413-472 (GQII…NCHS), and 488-577 (PVDE…RSGP). An intrachain disulfide couples cysteine 47 to cysteine 99. Residues asparagine 74 and asparagine 141 are each glycosylated (N-linked (GlcNAc...) asparagine). Cystine bridges form between cysteine 142–cysteine 195 and cysteine 245–cysteine 293. N-linked (GlcNAc...) asparagine glycans are attached at residues asparagine 309, asparagine 345, asparagine 360, asparagine 424, and asparagine 540. Intrachain disulfides connect cysteine 336–cysteine 375, cysteine 420–cysteine 465, and cysteine 512–cysteine 561. The chain crosses the membrane as a helical span at residues 590–610 (GLIAVVVIGVVIAALIVAAKY). Residues 611–678 (YFLRKAKAKQ…EPHQENGRLP (68 aa)) are Cytoplasmic-facing. The disordered stretch occupies residues 634–653 (NSNSEKVSEPSVETNSHYDS). The short motif at 658-663 (VEYTEV) is the ITIM motif element. A Phosphotyrosine; by FER modification is found at tyrosine 660.

Trans-homodimer (via Ig-like C2-type 1 and Ig-like C2-type 2 domains); trans-homodimerization is required for cell-cell interaction. Forms a complex with BDKRB2 and GNAQ. Interacts with BDKRB2 and GNAQ. Interacts with PTPN11. Interacts with FER. Interacts with CD177; the interaction is Ca(2+)-dependent; the interaction is direct. In terms of processing, phosphorylated on Ser and Tyr residues after cellular activation. In endothelial cells Fyn mediates mechanical-force (stretch or pull) induced tyrosine phosphorylation. Phosphorylated on tyrosine residues by FER and FES in response to FCER1 activation. Palmitoylation by ZDHHC21 is necessary for cell surface expression in endothelial cells and enrichment in membrane rafts.

Its subcellular location is the cell membrane. The protein localises to the membrane raft. It localises to the cell junction. Its function is as follows. Cell adhesion molecule which is required for leukocyte transendothelial migration (TEM) under most inflammatory conditions. Tyr-660 plays a critical role in TEM and is required for efficient trafficking of PECAM1 to and from the lateral border recycling compartment (LBRC) and is also essential for the LBRC membrane to be targeted around migrating leukocytes. Trans-homophilic interaction may play a role in endothelial cell-cell adhesion via cell junctions. Heterophilic interaction with CD177 plays a role in transendothelial migration of neutrophils. Homophilic ligation of PECAM1 prevents macrophage-mediated phagocytosis of neighboring viable leukocytes by transmitting a detachment signal. Promotes macrophage-mediated phagocytosis of apoptotic leukocytes by tethering them to the phagocytic cells; PECAM1-mediated detachment signal appears to be disabled in apoptotic leukocytes. Modulates bradykinin receptor BDKRB2 activation. Regulates bradykinin- and hyperosmotic shock-induced ERK1/2 activation in endothelial cells. Induces susceptibility to atherosclerosis. The sequence is that of Platelet endothelial cell adhesion molecule (Pecam1) from Rattus norvegicus (Rat).